Reading from the N-terminus, the 530-residue chain is Negative elongation factor A (530 aa).

Residues 89–248 form the HDAg domain; the sequence is WVLMVADILK…TPIPPSRTPL (160 aa). Residues 125–188 form an NELF-C/D-binding region; the sequence is REKVSECEAS…LQKSTETAQQ (64 aa). At Thr157 the chain carries Phosphothreonine. Residues 189 to 248 are RNAPII-binding; the sequence is LKRSAGVPFHAKGRGLLRKMDTTTPLKGIPKQAPFRSPTTPSVFSPSGNRTPIPPSRTPL. 3 disordered regions span residues 213 to 248, 266 to 296, and 312 to 409; these read PLKG…RTPL, GAGR…VENA, and SLNS…TAQT. Phosphoserine occurs at positions 225 and 233. Positions 225–238 are enriched in polar residues; the sequence is SPTTPSVFSPSGNR. At Thr277 the chain carries Phosphothreonine. Residues 277 to 291 show a composition bias toward basic and acidic residues; sequence TLDTEVVEKPTKEET. Low complexity predominate over residues 315 to 341; that stretch reads SEPTLPSTSYLPSTPSVVPASSYIPSS. Phosphoserine is present on Ser363.

This sequence belongs to the NELF-A family. In terms of assembly, the NELF complex is composed of NELFA, NELFB, NELFCD and NELFE; NELFA and NELFCD form a stable subcomplex that binds to the N-terminus of NELFB. In vitro, the NELFA:NELFCD subcomplex binds to ssDNA and ssRNA in a sequence- and structure-dependent manner. Interacts with the RNA polymerase II complex when it is not phosphorylated by P-TEFb. Interacts with NELFB. Ubiquitous. Expressed in brain, heart, spleen, lung, liver, muscle, kidney and testis. Already expressed in 7 dpc embryos.

The protein localises to the nucleus. In terms of biological role, essential component of the NELF complex, a complex that negatively regulates the elongation of transcription by RNA polymerase II. The NELF complex, which acts via an association with the DSIF complex and causes transcriptional pausing, is counteracted by the P-TEFb kinase complex. The chain is Negative elongation factor A (Nelfa) from Mus musculus (Mouse).